The chain runs to 224 residues: ATP-dependent dethiobiotin synthetase BioD (224 aa).

12 to 17 (GVGKTF) serves as a coordination point for ATP. Thr16 is a Mg(2+) binding site. Lys37 is an active-site residue. Residue Thr41 participates in substrate binding. Residues Asn52, 107-110 (EGAG), 167-168 (GS), 197-199 (PEG), and Glu204 each bind ATP. Mg(2+) is bound by residues Asn52 and Glu107.

Belongs to the dethiobiotin synthetase family. In terms of assembly, homodimer. The cofactor is Mg(2+).

The protein resides in the cytoplasm. It carries out the reaction (7R,8S)-7,8-diammoniononanoate + CO2 + ATP = (4R,5S)-dethiobiotin + ADP + phosphate + 3 H(+). It functions in the pathway cofactor biosynthesis; biotin biosynthesis; biotin from 7,8-diaminononanoate: step 1/2. Its function is as follows. Catalyzes a mechanistically unusual reaction, the ATP-dependent insertion of CO2 between the N7 and N8 nitrogen atoms of 7,8-diaminopelargonic acid (DAPA, also called 7,8-diammoniononanoate) to form a ureido ring. This is ATP-dependent dethiobiotin synthetase BioD from Corynebacterium glutamicum (strain ATCC 13032 / DSM 20300 / JCM 1318 / BCRC 11384 / CCUG 27702 / LMG 3730 / NBRC 12168 / NCIMB 10025 / NRRL B-2784 / 534).